The primary structure comprises 177 residues: Interleukin-1 receptor antagonist protein (177 aa).

A signal peptide spans 1–25; sequence MEVSRYLCSYLISFLLFLFHSETAC. An intrachain disulfide couples C91 to C141. The N-linked (GlcNAc...) asparagine glycan is linked to N109.

Belongs to the IL-1 family.

The protein resides in the secreted. Anti-inflammatory antagonist of interleukin-1 family of proinflammatory cytokines such as interleukin-1beta/IL1B and interleukin-1alpha/IL1A. Protects from immune dysregulation and uncontrolled systemic inflammation triggered by IL1 for a range of innate stimulatory agents such as pathogens. The polypeptide is Interleukin-1 receptor antagonist protein (IL1RN) (Sus scrofa (Pig)).